The primary structure comprises 310 residues: Light-independent protochlorophyllide reductase iron-sulfur ATP-binding protein (310 aa).

ATP contacts are provided by residues 53–58 (GIGKST) and Lys82. Ser57 is a Mg(2+) binding site. [4Fe-4S] cluster-binding residues include Cys138 and Cys172. Residues 223 to 224 (NR) and 247 to 249 (PAL) contribute to the ATP site.

It belongs to the NifH/BchL/ChlL family. As to quaternary structure, homodimer. Protochlorophyllide reductase is composed of three subunits; BchL, BchN and BchB. It depends on [4Fe-4S] cluster as a cofactor.

It carries out the reaction chlorophyllide a + oxidized 2[4Fe-4S]-[ferredoxin] + 2 ADP + 2 phosphate = protochlorophyllide a + reduced 2[4Fe-4S]-[ferredoxin] + 2 ATP + 2 H2O. The protein operates within porphyrin-containing compound metabolism; bacteriochlorophyll biosynthesis (light-independent). Functionally, component of the dark-operative protochlorophyllide reductase (DPOR) that uses Mg-ATP and reduced ferredoxin to reduce ring D of protochlorophyllide (Pchlide) to form chlorophyllide a (Chlide). This reaction is light-independent. The L component serves as a unique electron donor to the NB-component of the complex, and binds Mg-ATP. The protein is Light-independent protochlorophyllide reductase iron-sulfur ATP-binding protein of Rhodopseudomonas palustris (strain BisA53).